Here is a 343-residue protein sequence, read N- to C-terminus: 3-dehydroquinate synthase (343 aa).

Residues 86-90, 110-111, lysine 123, and lysine 132 contribute to the NAD(+) site; these read GALLD and TT. 3 residues coordinate Zn(2+): glutamate 165, histidine 229, and histidine 243.

Belongs to the sugar phosphate cyclases superfamily. Dehydroquinate synthase family. Co(2+) serves as cofactor. Requires Zn(2+) as cofactor. It depends on NAD(+) as a cofactor.

It is found in the cytoplasm. It carries out the reaction 7-phospho-2-dehydro-3-deoxy-D-arabino-heptonate = 3-dehydroquinate + phosphate. It functions in the pathway metabolic intermediate biosynthesis; chorismate biosynthesis; chorismate from D-erythrose 4-phosphate and phosphoenolpyruvate: step 2/7. In terms of biological role, catalyzes the conversion of 3-deoxy-D-arabino-heptulosonate 7-phosphate (DAHP) to dehydroquinate (DHQ). This is 3-dehydroquinate synthase from Pyrobaculum islandicum (strain DSM 4184 / JCM 9189 / GEO3).